A 265-amino-acid polypeptide reads, in one-letter code: Putative pyruvate, phosphate dikinase regulatory protein 2 (265 aa).

An ADP-binding site is contributed by 150 to 157; that stretch reads GVSRTSKT.

The protein belongs to the pyruvate, phosphate/water dikinase regulatory protein family. PDRP subfamily.

The enzyme catalyses N(tele)-phospho-L-histidyl/L-threonyl-[pyruvate, phosphate dikinase] + ADP = N(tele)-phospho-L-histidyl/O-phospho-L-threonyl-[pyruvate, phosphate dikinase] + AMP + H(+). It catalyses the reaction N(tele)-phospho-L-histidyl/O-phospho-L-threonyl-[pyruvate, phosphate dikinase] + phosphate + H(+) = N(tele)-phospho-L-histidyl/L-threonyl-[pyruvate, phosphate dikinase] + diphosphate. In terms of biological role, bifunctional serine/threonine kinase and phosphorylase involved in the regulation of the pyruvate, phosphate dikinase (PPDK) by catalyzing its phosphorylation/dephosphorylation. This Latilactobacillus sakei subsp. sakei (strain 23K) (Lactobacillus sakei subsp. sakei) protein is Putative pyruvate, phosphate dikinase regulatory protein 2.